An 805-amino-acid polypeptide reads, in one-letter code: Sucrose synthase (805 aa).

The tract at residues 275–752 is GT-B glycosyltransferase; it reads MVFNVVILSP…GLKRIEEKYT (478 aa).

It belongs to the glycosyltransferase 1 family. Plant sucrose synthase subfamily. Expression is at least 10-fold higher in tubers compared to photosynthetically active tissues.

The enzyme catalyses an NDP-alpha-D-glucose + D-fructose = a ribonucleoside 5'-diphosphate + sucrose + H(+). In terms of biological role, sucrose-cleaving enzyme that provides UDP-glucose and fructose for various metabolic pathways. This Solanum tuberosum (Potato) protein is Sucrose synthase.